The chain runs to 236 residues: Small ribosomal subunit protein uS3 (236 aa).

One can recognise a KH type-2 domain in the interval 39 to 107; the sequence is IRSYVMEELK…ETSLNIVEIR (69 aa). The segment at 214-236 is disordered; sequence ASEHRATRNDNSSSSLNRRRESV.

Belongs to the universal ribosomal protein uS3 family. Part of the 30S ribosomal subunit. Forms a tight complex with proteins S10 and S14.

Its function is as follows. Binds the lower part of the 30S subunit head. Binds mRNA in the 70S ribosome, positioning it for translation. This Bartonella bacilliformis (strain ATCC 35685 / KC583 / Herrer 020/F12,63) protein is Small ribosomal subunit protein uS3.